The primary structure comprises 355 residues: Anthocyanin synthase (355 aa).

Tyrosine 145 and lysine 216 together coordinate substrate. A Fe2OG dioxygenase domain is found at 211-310 (LLLQMKINYY…RISWAVFCEP (100 aa)). 218-220 (NYY) provides a ligand contact to 2-oxoglutarate. A Fe cation-binding site is contributed by histidine 235. Substrate is bound at residue threonine 236. Fe cation contacts are provided by aspartate 237 and histidine 291. Residues arginine 301 and 301–303 (RIS) contribute to the 2-oxoglutarate site. Residues glutamate 309 and lysine 344 each contribute to the substrate site.

The protein belongs to the iron/ascorbate-dependent oxidoreductase family. L-ascorbate is required as a cofactor. The cofactor is Fe(2+). As to expression, expressed in stems and leaves. Expressed at low levels in ovaries.

It carries out the reaction a (2R,3S,4S)-leucoanthocyanidin + 2-oxoglutarate + O2 = a 4-H-anthocyanidin with a 3-hydroxy group + succinate + CO2 + 2 H2O. The protein operates within pigment biosynthesis; anthocyanin biosynthesis. Its function is as follows. Involved in anthocyanin biosynthesis by catalyzing the oxidation of leucoanthocyanidins into anthocyanidins. Required for the accumulation of anthocyanin in red-fleshed kiwifruit varieties. This Actinidia chinensis var. chinensis (Chinese soft-hair kiwi) protein is Anthocyanin synthase.